A 470-amino-acid polypeptide reads, in one-letter code: MGELNKSARQIVEAVGGAENIAAATHCVTRLRFALIDESKVDQEMLDQIDVVKGSFSTNGQFQVVIGQGTVNKVYAELVKETGIGESTKDEVKKASEKNMNPLQRAVKTLADIFIPILPAIVTAGLLMGINNILTAEGIFFSTKSIVQVYPQWADLANMINLIAGTAFTFLPALIGWSAVKRFGGNPLLGIVLGVMLVHPDLLNAWGYGAAEQSGEIPVWNLFGLEVQKVGYQGQVLPILLASYMLAKIEVFLTKRTPEGIQLLVVAPITLLLTGFASFIIIGPITFAIGNVLTSGLISVFGSFAALGGLLYGGFYSALVITGMHHTFLAVDLQLIGSKLGGTFLWPMLALSNIAQGSAALAMMFIVKDEKQKGLSLTSGISAYLGITEPAIFGVNLRYRFPFIIAMVSSGLAGMYISSQGVLASSVGVGGVPGIFSIMSQYWGAFAIGMAIVLIVPFAGTYAYARFKHK.

The 88-residue stretch at 1-88 (MGELNKSARQ…VKETGIGEST (88 aa)) folds into the PTS EIIB type-1 domain. C27 (phosphocysteine intermediate; for EIIB activity) is an active-site residue. At C27 the chain carries Phosphocysteine; by EIIA. A PTS EIIC type-1 domain is found at 108–470 (KTLADIFIPI…TYAYARFKHK (363 aa)). 10 helical membrane passes run 110 to 130 (LADI…LMGI), 160 to 180 (INLI…WSAV), 183 to 203 (FGGN…PDLL), 234 to 254 (GQVL…VFLT), 263 to 283 (LLVV…IIIG), 301 to 321 (FGSF…ALVI), 326 to 346 (HTFL…TFLW), 347 to 367 (PMLA…MFIV), 403 to 423 (FIIA…QGVL), and 443 to 463 (WGAF…GTYA).

The protein resides in the cell membrane. It catalyses the reaction alpha,alpha-trehalose(out) + N(pros)-phospho-L-histidyl-[protein] = alpha,alpha-trehalose 6-phosphate(in) + L-histidyl-[protein]. In terms of biological role, the phosphoenolpyruvate-dependent sugar phosphotransferase system (sugar PTS), a major carbohydrate active transport system, catalyzes the phosphorylation of incoming sugar substrates concomitantly with their translocation across the cell membrane. This system is involved in trehalose transport. In Bacillus subtilis (strain 168), this protein is PTS system trehalose-specific EIIBC component (treP).